The chain runs to 199 residues: Recombination protein RecR (199 aa).

The segment at Cys-60–Cys-75 adopts a C4-type zinc-finger fold. The Toprim domain maps to Ser-83 to Pro-178.

Belongs to the RecR family.

Functionally, may play a role in DNA repair. It seems to be involved in an RecBC-independent recombinational process of DNA repair. It may act with RecF and RecO. This is Recombination protein RecR from Paracidovorax citrulli (strain AAC00-1) (Acidovorax citrulli).